We begin with the raw amino-acid sequence, 207 residues long: Superoxide dismutase [Mn] (207 aa).

Residues histidine 28, histidine 76, aspartate 160, and histidine 164 each coordinate Mn(2+).

This sequence belongs to the iron/manganese superoxide dismutase family. In terms of assembly, homotetramer. It depends on Mn(2+) as a cofactor.

The protein resides in the secreted. The enzyme catalyses 2 superoxide + 2 H(+) = H2O2 + O2. Destroys superoxide anion radicals which are normally produced within the cells and which are toxic to biological systems. The chain is Superoxide dismutase [Mn] (sodA) from Mycolicibacterium smegmatis (Mycobacterium smegmatis).